The following is a 351-amino-acid chain: Anthranilate phosphoribosyltransferase (351 aa).

Residues glycine 90, glycine 93–aspartate 94, threonine 98, asparagine 100–threonine 103, lysine 118–glycine 126, and serine 130 contribute to the 5-phospho-alpha-D-ribose 1-diphosphate site. Glycine 90 contacts anthranilate. Serine 102 serves as a coordination point for Mg(2+). An anthranilate-binding site is contributed by asparagine 121. Arginine 176 is a binding site for anthranilate. Aspartate 235 and glutamate 236 together coordinate Mg(2+).

The protein belongs to the anthranilate phosphoribosyltransferase family. Homodimer. It depends on Mg(2+) as a cofactor.

The catalysed reaction is N-(5-phospho-beta-D-ribosyl)anthranilate + diphosphate = 5-phospho-alpha-D-ribose 1-diphosphate + anthranilate. The protein operates within amino-acid biosynthesis; L-tryptophan biosynthesis; L-tryptophan from chorismate: step 2/5. In terms of biological role, catalyzes the transfer of the phosphoribosyl group of 5-phosphorylribose-1-pyrophosphate (PRPP) to anthranilate to yield N-(5'-phosphoribosyl)-anthranilate (PRA). The chain is Anthranilate phosphoribosyltransferase from Prochlorococcus marinus (strain MIT 9313).